We begin with the raw amino-acid sequence, 279 residues long: NADPH-dependent 7-cyano-7-deazaguanine reductase (279 aa).

Substrate is bound at residue Ile-86 to Ser-88. Ser-88–Lys-89 is an NADPH binding site. The Thioimide intermediate role is filled by Cys-187. Catalysis depends on Asp-194, which acts as the Proton donor. His-226–Glu-227 lines the substrate pocket. Residue Arg-255 to Gly-256 coordinates NADPH.

This sequence belongs to the GTP cyclohydrolase I family. QueF type 2 subfamily. In terms of assembly, homodimer.

It localises to the cytoplasm. It carries out the reaction 7-aminomethyl-7-carbaguanine + 2 NADP(+) = 7-cyano-7-deazaguanine + 2 NADPH + 3 H(+). It participates in tRNA modification; tRNA-queuosine biosynthesis. Its function is as follows. Catalyzes the NADPH-dependent reduction of 7-cyano-7-deazaguanine (preQ0) to 7-aminomethyl-7-deazaguanine (preQ1). The chain is NADPH-dependent 7-cyano-7-deazaguanine reductase from Pasteurella multocida (strain Pm70).